The primary structure comprises 606 residues: Transcription factor glial cells missing 2 (606 aa).

Positions 20–37 (DHSQLTQFVQPQSQSTHS) are enriched in polar residues. Disordered stretches follow at residues 20 to 65 (DHSQ…KGKR), 475 to 501 (EMQQ…HHYY), and 561 to 606 (TAPT…SVTH). Residues 44-61 (PGQQQAGGSMTMPSSSTG) show a composition bias toward low complexity. Residues 65-224 (REWDINDAIV…KNSSVSKRAF (160 aa)) constitute a DNA-binding region (GCM). Positions 490 to 501 (FGGNQTAGHHYY) are enriched in polar residues. The segment covering 569-580 (PGHPPPPPPPPT) has biased composition (pro residues). Residues 583-593 (YHHHHHHHLHH) show a composition bias toward basic residues. Positions 594-606 (PAAATGLAPSVTH) are enriched in low complexity.

Expressed in glial lineages within embryonic procephalic mesoderm. Expression is highest in hemocyte primordia and longitudinal and nerve root ganglia.

Its subcellular location is the nucleus. Functionally, transcription factor with a minor role promoting glial cell differentiation and a more significant role in hematocyte differentiation. Gcm2, together with gcm, is required for the proliferation of plasmatocyte precursors, the expression of Croquemort protein, and the ability of plasmatocytes to convert into macrophages. In Drosophila melanogaster (Fruit fly), this protein is Transcription factor glial cells missing 2 (gcm2).